The following is a 362-amino-acid chain: Phospho-2-dehydro-3-deoxyheptonate aldolase (362 aa).

The protein belongs to the class-I DAHP synthase family.

The catalysed reaction is D-erythrose 4-phosphate + phosphoenolpyruvate + H2O = 7-phospho-2-dehydro-3-deoxy-D-arabino-heptonate + phosphate. The protein operates within metabolic intermediate biosynthesis; chorismate biosynthesis; chorismate from D-erythrose 4-phosphate and phosphoenolpyruvate: step 1/7. In terms of biological role, stereospecific condensation of phosphoenolpyruvate (PEP) and D-erythrose-4-phosphate (E4P) giving rise to 3-deoxy-D-arabino-heptulosonate-7-phosphate (DAHP). The polypeptide is Phospho-2-dehydro-3-deoxyheptonate aldolase (aroG) (Haemophilus influenzae (strain ATCC 51907 / DSM 11121 / KW20 / Rd)).